Reading from the N-terminus, the 447-residue chain is Cysteine--tRNA ligase (447 aa).

Cys-28 is a binding site for Zn(2+). The short motif at 30–40 (PTVYNYIHVGN) is the 'HIGH' region element. Positions 211, 236, and 240 each coordinate Zn(2+). The short motif at 268 to 272 (KMSKS) is the 'KMSKS' region element. An ATP-binding site is contributed by Lys-271.

Belongs to the class-I aminoacyl-tRNA synthetase family. Monomer. The cofactor is Zn(2+).

The protein resides in the cytoplasm. It carries out the reaction tRNA(Cys) + L-cysteine + ATP = L-cysteinyl-tRNA(Cys) + AMP + diphosphate. The protein is Cysteine--tRNA ligase of Streptococcus pneumoniae serotype 4 (strain ATCC BAA-334 / TIGR4).